Here is a 577-residue protein sequence, read N- to C-terminus: Arginine--tRNA ligase (577 aa).

A 'HIGH' region motif is present at residues 122 to 132 (PNVAKEMHVGH).

It belongs to the class-I aminoacyl-tRNA synthetase family. In terms of assembly, monomer.

The protein resides in the cytoplasm. The catalysed reaction is tRNA(Arg) + L-arginine + ATP = L-arginyl-tRNA(Arg) + AMP + diphosphate. In Salmonella enteritidis PT4 (strain P125109), this protein is Arginine--tRNA ligase.